Consider the following 729-residue polypeptide: Cytoplasmic polyadenylation element-binding protein 4 (729 aa).

Disordered stretches follow at residues 20–50 (FPVR…NNTA) and 78–133 (EKAK…KEKL). Basic residues predominate over residues 24 to 35 (FHPHLQPPHHHQ). Over residues 83–96 (QQQEQQDPLEKQQL) the composition is skewed to low complexity. Phosphoserine occurs at positions 97, 99, and 137. The disordered stretch occupies residues 218–324 (FGGSFSPQIG…RDHRRGLNGG (107 aa)). Over residues 232–249 (HHPHHPHFQHHHSQHQQQ) the composition is skewed to basic residues. Phosphoserine is present on residues S252 and S255. The segment covering 285–300 (WSSYQSPSPTPSSSWS) has biased composition (low complexity). The span at 301-311 (PGGGGYGGWGA) shows a compositional bias: gly residues. T326 is modified (phosphothreonine). Phosphoserine occurs at positions 330 and 332. 2 RRM domains span residues 472–563 (RKVF…PWNL) and 580–662 (KTIF…PYVL). The interval 541 to 543 (KLY) is RNA-binding. 8 residues coordinate Zn(2+): C667, C675, C684, C689, C694, C697, H702, and H710.

This sequence belongs to the RRM CPEB family. Interacts with TOB1. In terms of tissue distribution, highly expressed in brain, including hippocampus, amygdala, granule and Purkinje cells of the cerebellum (at protein level). Expressed in spinal cord (at protein level). Expressed in kidney, lung and heart (at protein level). Expressed in liver (at protein level). Expressed in spleen and testis (at protein level). Weakly expressed in ovary and in granular cells of dentate gyrus and the pyramidal cells of CA3 and CA1 of the hippocampus.

It localises to the cytoplasm. The protein localises to the cell projection. Its subcellular location is the dendrite. It is found in the dendritic spine. The protein resides in the postsynaptic density. It localises to the axon. The protein localises to the growth cone. Its subcellular location is the endoplasmic reticulum. It is found in the perinuclear region. Its function is as follows. Sequence-specific RNA-binding protein that binds to the cytoplasmic polyadenylation element (CPE), an uridine-rich sequence element (consensus sequence 5'-UUUUUAU-3') within the mRNA 3'-UTR. RNA binding results in a clear conformational change analogous to the Venus fly trap mechanism. Regulates activation of unfolded protein response (UPR) in the process of adaptation to ER stress in liver, by maintaining translation of CPE-regulated mRNAs in conditions in which global protein synthesis is inhibited. Required for cell cycle progression, specifically for cytokinesis and chromosomal segregation. Plays a role as an oncogene promoting tumor growth and progression by positively regulating translation of t-plasminogen activator/PLAT. Stimulates proliferation of melanocytes. In contrast to CPEB1 and CPEB3, does not play role in synaptic plasticity, learning and memory. The sequence is that of Cytoplasmic polyadenylation element-binding protein 4 (Cpeb4) from Mus musculus (Mouse).